Consider the following 298-residue polypeptide: Tritrans,polycis-undecaprenyl-diphosphate synthase (geranylgeranyl-diphosphate specific) (298 aa).

Residue Asp-35 is part of the active site. Asp-35 contacts Mg(2+). Residues 36–39 (GNRR), Arg-48, His-52, and 80–82 (STE) each bind substrate. Asn-83 acts as the Proton acceptor in catalysis. Substrate contacts are provided by residues Phe-84, Arg-86, Arg-208, and 214–216 (RIS).

The protein belongs to the UPP synthase family. As to quaternary structure, homodimer. Requires Mg(2+) as cofactor.

The catalysed reaction is geranylgeranyl diphosphate + 7 isopentenyl diphosphate = tri-trans,hepta-cis-undecaprenyl diphosphate + 7 diphosphate. In terms of biological role, catalyzes the sequential condensation of isopentenyl diphosphate (IPP) with geranylgeranyl diphosphate (GGPP) to yield (2Z,6Z,10Z,14Z,18Z,22Z,26Z,30E,34E,38E)-undecaprenyl diphosphate (tritrans,heptacis-UPP). It is probably the precursor of glycosyl carrier lipids. The polypeptide is Tritrans,polycis-undecaprenyl-diphosphate synthase (geranylgeranyl-diphosphate specific) (Methanosarcina mazei (strain ATCC BAA-159 / DSM 3647 / Goe1 / Go1 / JCM 11833 / OCM 88) (Methanosarcina frisia)).